Reading from the N-terminus, the 881-residue chain is Probable intermembrane transport protein HI_1672 (881 aa).

Residues 30 to 49 traverse the membrane as a helical segment; it reads FWLLPFIALCIGAILFFQIV.

It belongs to the PqiB family.

It is found in the cell inner membrane. The chain is Probable intermembrane transport protein HI_1672 from Haemophilus influenzae (strain ATCC 51907 / DSM 11121 / KW20 / Rd).